A 43-amino-acid chain; its full sequence is Protein PsbN (43 aa).

A helical transmembrane segment spans residues 5-27; that stretch reads TLVAISISCLLVSFTGYALYTAF.

Belongs to the PsbN family.

The protein localises to the plastid. Its subcellular location is the chloroplast thylakoid membrane. Its function is as follows. May play a role in photosystem I and II biogenesis. This is Protein PsbN from Cryptomeria japonica (Japanese cedar).